Consider the following 335-residue polypeptide: Flagellar P-ring protein (335 aa).

The N-terminal stretch at 1 to 17 is a signal peptide; the sequence is MNKLMLMLITFATSLLA.

This sequence belongs to the FlgI family. The basal body constitutes a major portion of the flagellar organelle and consists of four rings (L,P,S, and M) mounted on a central rod.

It localises to the periplasm. Its subcellular location is the bacterial flagellum basal body. Assembles around the rod to form the L-ring and probably protects the motor/basal body from shearing forces during rotation. The chain is Flagellar P-ring protein (flgI) from Borreliella burgdorferi (strain ATCC 35210 / DSM 4680 / CIP 102532 / B31) (Borrelia burgdorferi).